The sequence spans 745 residues: Junction plakoglobin (745 aa).

An N-acetylmethionine modification is found at methionine 1. A glycan (O-linked (GlcNAc) threonine) is linked at threonine 14. Phosphoserine is present on residues serine 99 and serine 125. ARM repeat units follow at residues 132 to 171 (NYQD…QLSK), 172 to 215 (KEAS…LSHH), 216 to 255 (REGL…NLLL), 258 to 297 (EGAK…LLAY), 298 to 341 (GNQE…LSVC), 342 to 381 (PSNK…NLSD), 383 to 420 (ATKQ…NLTC), 423 to 464 (SKNK…HLTS), 470 to 510 (EMAQ…NLAL), 512 to 551 (PANH…QPYT), 574 to 613 (PMNR…ELAQ), and 615 to 661 (KEAA…PDYR). The tract at residues 132–297 (NYQDDAELAT…TTDCLQLLAY (166 aa)) is interaction with DSC1 and DSG1. Serine 182 carries the post-translational modification Phosphoserine. Positions 574 to 661 (PMNRMEIFRL…ISEDKNPDYR (88 aa)) are interaction with DSC1. Phosphoserine is present on residues serine 665 and serine 730.

The protein belongs to the beta-catenin family. In terms of assembly, homodimer. Component of an E-cadherin/catenin adhesion complex composed of at least E-cadherin/CDH1 and gamma-catenin/JUP, and possibly alpha-catenin/CTNNA1; the complex is located to adherens junctions. The stable association of CTNNA1 is controversial as CTNNA1 was shown not to bind to F-actin when assembled in the complex. Interacts with MUC1. Interacts with CAV1. Interacts with PTPRJ. Interacts with DSG1. Interacts with DSC1 and DSC2. Interacts with PKP2. Interacts with PKP3 (via N-terminus); the interaction is required for PKP3 localization to desmosome cell-cell junctions. Interacts with DSG4. In terms of processing, may be phosphorylated by FER. Expressed in the mammary epithelium (at protein level).

Its subcellular location is the cell junction. It is found in the adherens junction. It localises to the desmosome. The protein localises to the cytoplasm. The protein resides in the cytoskeleton. Its subcellular location is the cell membrane. It is found in the nucleus. Its function is as follows. Common junctional plaque protein. The membrane-associated plaques are architectural elements in an important strategic position to influence the arrangement and function of both the cytoskeleton and the cells within the tissue. The presence of plakoglobin in both the desmosomes and in the intermediate junctions suggests that it plays a central role in the structure and function of submembranous plaques. Acts as a substrate for VE-PTP and is required by it to stimulate VE-cadherin function in endothelial cells. Can replace beta-catenin in E-cadherin/catenin adhesion complexes which are proposed to couple cadherins to the actin cytoskeleton. The protein is Junction plakoglobin of Mus musculus (Mouse).